The primary structure comprises 108 residues: uncharacterized protein (108 aa).

A helical transmembrane segment spans residues 7–27 (FIPMLLVANAAPYFFYPIFML).

This sequence to N.crassa NCU05373.1.

It is found in the membrane. This is an uncharacterized protein from Schizosaccharomyces pombe (strain 972 / ATCC 24843) (Fission yeast).